Reading from the N-terminus, the 288-residue chain is MAAKIIDGKTIAQQVRLEVAEKVKARVAAGKRAPGLAVVLVGANPASQIYVGSKRKACEEVGFVSRSYDLPETTSEAELLALIDELNADAAIDGILVQLPLPAGIDNVKVLERIAPDKDVDGFHPYNVGRLCQRAPRLRPCTPRGIVTLLERYNIDTYGLNAVVIGASNIVGRPMSMELLLAGCTTTVTHRFTKNLRQHVENADLLIVAVGKPGFIPGEWIKEGAIVIDVGINRLENGKVVGDVVFEEAAKRASYITPVPGGVGPMTVATLIQNTLQACVEYHDGEEA.

NADP(+) is bound by residues 166–168 and Ile232; that span reads GAS.

It belongs to the tetrahydrofolate dehydrogenase/cyclohydrolase family. As to quaternary structure, homodimer.

The catalysed reaction is (6R)-5,10-methylene-5,6,7,8-tetrahydrofolate + NADP(+) = (6R)-5,10-methenyltetrahydrofolate + NADPH. It carries out the reaction (6R)-5,10-methenyltetrahydrofolate + H2O = (6R)-10-formyltetrahydrofolate + H(+). It functions in the pathway one-carbon metabolism; tetrahydrofolate interconversion. Catalyzes the oxidation of 5,10-methylenetetrahydrofolate to 5,10-methenyltetrahydrofolate and then the hydrolysis of 5,10-methenyltetrahydrofolate to 10-formyltetrahydrofolate. This Cronobacter sakazakii (strain ATCC BAA-894) (Enterobacter sakazakii) protein is Bifunctional protein FolD.